We begin with the raw amino-acid sequence, 60 residues long: Large ribosomal subunit protein bL32 (60 aa).

Basic residues predominate over residues 1–22 (MAVPKKKTSKSRRDMRRSHHAL). The segment at 1 to 27 (MAVPKKKTSKSRRDMRRSHHALKGSAY) is disordered.

This sequence belongs to the bacterial ribosomal protein bL32 family.

This is Large ribosomal subunit protein bL32 from Rhodospirillum centenum (strain ATCC 51521 / SW).